The chain runs to 369 residues: Probable methyltransferase TCM_000331 (369 aa).

S-adenosyl-L-homocysteine contacts are provided by Tyr-18, Cys-60, Asn-65, Asp-98, Leu-99, Ser-137, and Phe-138. 4 residues coordinate Mg(2+): Asn-176, Asp-261, Phe-263, and Asn-264.

Belongs to the methyltransferase superfamily. Type-7 methyltransferase family. Mg(2+) is required as a cofactor.

The protein is Probable methyltransferase TCM_000331 of Theobroma cacao (Cacao).